We begin with the raw amino-acid sequence, 247 residues long: DNA repair protein RecO (247 aa).

It belongs to the RecO family.

Functionally, involved in DNA repair and RecF pathway recombination. This is DNA repair protein RecO from Brucella abortus (strain 2308).